We begin with the raw amino-acid sequence, 653 residues long: E3 ubiquitin-protein ligase TRIM32 (653 aa).

Alanine 2 is subject to N-acetylalanine. The RING-type zinc finger occupies 20-65; that stretch reads CPICMESFTEEQLRPKLLHCGHTICRQCLEKLLASSINGVRCPFCS. Residue serine 55 is modified to Phosphoserine; by CHEK2. Cysteine 100, cysteine 103, cysteine 123, and histidine 128 together coordinate Zn(2+). The segment at 103–133 adopts a B box-type zinc-finger fold; sequence CGRRLPRQFCRSCGLVLCEPCREADHQPPGH. Residues 138–197 are a coiled coil; that stretch reads VKEAAEERRRDFGEKLTRLRELMGELQRRKAALEGVSKDLQARYKAVLQEYGHEERRVQD. Residues serine 328, serine 335, and serine 339 each carry the phosphoserine modification. NHL repeat units lie at residues 358-401, 415-458, 459-499, 562-605, and 606-646; these read LKKM…FTRK, DSFV…YTLD, GHCV…FTVD, GRQI…FPKG, and GGYS…YSYH.

Belongs to the TRIM/RBCC family. As to quaternary structure, it self-associates. Interacts with DTNBP1. Interacts with PIAS4/PIASY upon treatment with UVB and TNF-alpha. Interacts with AMBRA1; promoting activation of ULK1 through unanchored 'Lys-63'-linked polyubiquitin chains. Interacts with TICAM1 and TAX1BP1; these interactions target TICAM1 to TAX1BP1-mediated selective autophagic degradation. In terms of assembly, (Microbial infection) Interacts with S.typhimurium protein SseK3; SseK3 does not glycosylate TRIM32. Ubiquitinated. Post-translationally, phosphorylation at Ser-55 by CHEK2 under oxidative stress, activates the E3 ligase activity and promotes ATG7 ubiquitination leading to positive regulation of the autophagosme assembly. In terms of tissue distribution, spleen, thymus, prostate, testis, ovary, intestine, colon and skeletal muscle.

It localises to the cytoplasm. Its subcellular location is the mitochondrion. The protein resides in the endoplasmic reticulum. It carries out the reaction S-ubiquitinyl-[E2 ubiquitin-conjugating enzyme]-L-cysteine + [acceptor protein]-L-lysine = [E2 ubiquitin-conjugating enzyme]-L-cysteine + N(6)-ubiquitinyl-[acceptor protein]-L-lysine.. Its pathway is protein modification; protein ubiquitination. E3 ubiquitin ligase that plays a role in various biological processes including neural stem cell differentiation, innate immunity, inflammatory resonse and autophagy. Plays a role in virus-triggered induction of IFN-beta and TNF-alpha by mediating the ubiquitination of STING1. Mechanistically, targets STING1 for 'Lys-63'-linked ubiquitination which promotes the interaction of STING1 with TBK1. Regulates bacterial clearance and promotes autophagy in Mycobacterium tuberculosis-infected macrophages. Negatively regulates TLR3/4-mediated innate immune and inflammatory response by triggering the autophagic degradation of TICAM1 in an E3 activity-independent manner. Plays an essential role in oxidative stress induced cell death by inducing loss of transmembrane potential and enhancing mitochondrial reactive oxygen species (ROS) production during oxidative stress conditions. Ubiquitinates XIAP and targets it for proteasomal degradation. Ubiquitinates DTNBP1 (dysbindin) and promotes its degradation. May ubiquitinate BBS2. Ubiquitinates PIAS4/PIASY and promotes its degradation in keratinocytes treated with UVB and TNF-alpha. Also acts as a regulator of autophagy by mediating formation of unanchored 'Lys-63'-linked polyubiquitin chains that activate ULK1: interaction with AMBRA1 is required for ULK1 activation. Positively regulates dendritic branching by promoting ubiquitination and subsequent degradation of the epigenetic factor CDYL. Under metabolic stress and phosphorylation by CHK2, mediates 'Lys-63'-linked ubiquitination of ATG7 at 'Lys-45' to initiate autophagy. Its function is as follows. (Microbial infection) May play a significant role in mediating the biological activity of the HIV-1 Tat protein in vivo. Binds specifically to the activation domain of HIV-1 Tat and can also interact with the HIV-2 and EIAV Tat proteins in vivo. The protein is E3 ubiquitin-protein ligase TRIM32 of Homo sapiens (Human).